A 202-amino-acid polypeptide reads, in one-letter code: ATP-dependent Clp protease proteolytic subunit (202 aa).

Residue serine 101 is the Nucleophile of the active site. Histidine 126 is an active-site residue.

Belongs to the peptidase S14 family. Component of the chloroplastic Clp protease core complex.

The protein resides in the plastid. The protein localises to the chloroplast stroma. The catalysed reaction is Hydrolysis of proteins to small peptides in the presence of ATP and magnesium. alpha-casein is the usual test substrate. In the absence of ATP, only oligopeptides shorter than five residues are hydrolyzed (such as succinyl-Leu-Tyr-|-NHMec, and Leu-Tyr-Leu-|-Tyr-Trp, in which cleavage of the -Tyr-|-Leu- and -Tyr-|-Trp bonds also occurs).. Functionally, cleaves peptides in various proteins in a process that requires ATP hydrolysis. Has a chymotrypsin-like activity. Plays a major role in the degradation of misfolded proteins. The protein is ATP-dependent Clp protease proteolytic subunit of Drimys granadensis.